A 257-amino-acid chain; its full sequence is MVEDHKHEESILEKIVEKIHGHGDSSSLSDSDDDKKSTSSSSSSFKSKIYRLFGREKPVHKVLGGGKPADIFLWRNKKVSGGVLGAVTASWVLFELFEYHLLAFLCHFAIFALAALFLWSNACTFIHKSTPHIPEVHIPEDPILQLVSGLRIEINRGLTLLRNIASGKDVKKFILVIAGLWVLSIIGSCYNFLTLFYTATVLLFTIPVLYEKYEDKVDAYGEKAMREIKKQYAVLDEKVLRKVISKIPRGALNKKKD.

Residues 19–42 (IHGHGDSSSLSDSDDDKKSTSSSS) are disordered. The 190-residue stretch at 68-257 (PADIFLWRNK…PRGALNKKKD (190 aa)) folds into the Reticulon domain. Transmembrane regions (helical) follow at residues 78-98 (KVSGGVLGAVTASWVLFELFE), 99-119 (YHLLAFLCHFAIFALAALFLW), and 173-193 (FILVIAGLWVLSIIGSCYNFL).

As to quaternary structure, interacts with VirB2.

The protein resides in the endoplasmic reticulum membrane. Plays a role in the Agrobacterium-mediated plant transformation via its interaction with VirB2, the major component of the T-pilus. The polypeptide is Reticulon-like protein B4 (RTNLB4) (Arabidopsis thaliana (Mouse-ear cress)).